A 149-amino-acid chain; its full sequence is Transcription antitermination protein NusB (149 aa).

Belongs to the NusB family.

Functionally, involved in transcription antitermination. Required for transcription of ribosomal RNA (rRNA) genes. Binds specifically to the boxA antiterminator sequence of the ribosomal RNA (rrn) operons. The protein is Transcription antitermination protein NusB of Hahella chejuensis (strain KCTC 2396).